The primary structure comprises 212 residues: Fe/S biogenesis protein NfuA (212 aa).

Cysteine 169 and cysteine 172 together coordinate [4Fe-4S] cluster.

It belongs to the NfuA family. In terms of assembly, homodimer. The cofactor is [4Fe-4S] cluster.

Its function is as follows. Involved in iron-sulfur cluster biogenesis. Binds a 4Fe-4S cluster, can transfer this cluster to apoproteins, and thereby intervenes in the maturation of Fe/S proteins. Could also act as a scaffold/chaperone for damaged Fe/S proteins. The chain is Fe/S biogenesis protein NfuA from Acinetobacter baumannii (strain SDF).